Reading from the N-terminus, the 44-residue chain is uncharacterized protein (44 aa).

The signal sequence occupies residues M1–A28.

This is an uncharacterized protein from Bacillus subtilis (strain 168).